The sequence spans 63 residues: Small ribosomal subunit protein eS27 (63 aa).

The Zn(2+) site is built by cysteine 18, cysteine 21, cysteine 37, and cysteine 40. A C4-type zinc finger spans residues 18 to 40 (CIDCGNEQIVFSHPATKVRCLIC).

Belongs to the eukaryotic ribosomal protein eS27 family. As to quaternary structure, part of the 30S ribosomal subunit. Zn(2+) serves as cofactor.

This Pyrococcus furiosus (strain ATCC 43587 / DSM 3638 / JCM 8422 / Vc1) protein is Small ribosomal subunit protein eS27.